Reading from the N-terminus, the 427-residue chain is Mitogen-activated protein kinase 8B (427 aa).

The 296-residue stretch at 26–321 folds into the Protein kinase domain; it reads YQNLRPIGSG…VDEALQHPYI (296 aa). ATP is bound by residues 33 to 40 and K55; that span reads GSGAQGIV. D151 acts as the Proton acceptor in catalysis. Phosphothreonine is present on T183. Positions 183 to 185 match the TXY motif; that stretch reads TPY. Y185 bears the Phosphotyrosine mark. The segment at 372–427 is disordered; the sequence is IRGQPSPIGAAVINGSPQPSSSSSINDVSSMSTEPTVASDTDSSLEASAGPLSCCR. Residues 387 to 403 show a composition bias toward low complexity; it reads SPQPSSSSSINDVSSMS. A compositionally biased stretch (polar residues) spans 404-417; the sequence is TEPTVASDTDSSLE.

The protein belongs to the protein kinase superfamily. CMGC Ser/Thr protein kinase family. MAP kinase subfamily. Requires Mg(2+) as cofactor. Post-translationally, dually phosphorylated on Thr-183 and Tyr-185, which activates the enzyme. In terms of tissue distribution, expressed at high levels in the ovary and at lower levels in brain, gill, heart, spleen, liver, kidney, muscle, bladder and gut.

The catalysed reaction is L-seryl-[protein] + ATP = O-phospho-L-seryl-[protein] + ADP + H(+). It carries out the reaction L-threonyl-[protein] + ATP = O-phospho-L-threonyl-[protein] + ADP + H(+). Activated by threonine and tyrosine phosphorylation. Responds to activation by environmental stress and pro-inflammatory cytokines by phosphorylating a number of transcription factors, primarily components of AP-1 such as c-Jun and ATF2 and thus regulates AP-1 transcriptional activity. May play a role in the regulation of the circadian clock. The chain is Mitogen-activated protein kinase 8B (mapk8b) from Cyprinus carpio (Common carp).